The sequence spans 89 residues: Small ribosomal subunit protein bS20 (89 aa).

The disordered stretch occupies residues 1–25 (MANTPQSKKRARQLERRTAVNKARR).

The protein belongs to the bacterial ribosomal protein bS20 family.

In terms of biological role, binds directly to 16S ribosomal RNA. This Paracoccus denitrificans (strain Pd 1222) protein is Small ribosomal subunit protein bS20.